The sequence spans 270 residues: Protein MGF 110-1L (270 aa).

Residues 1-26 (MLGLQIITLLFIPTLLYAYELEPLER) form the signal peptide. One copy of the A repeat lies at 1–146 (MLGLQIITLL…YIRKRSLQTI (146 aa)). A glycan (N-linked (GlcNAc...) asparagine; by host) is linked at Asn-75. The next 2 membrane-spanning stretches (helical) occupy residues 118–138 (WQKLLTYGFYLVGCVLVVNYI) and 146–166 (IVYLLVLLVIFFLLSQLMLYR). The stretch at 147–270 (VYLLVLLVIF…DNLMKKQDIM (124 aa)) is one B repeat.

This sequence belongs to the asfivirus MGF 110 family.

Its subcellular location is the membrane. Functionally, plays a role in virus cell tropism, and may be required for efficient virus replication in macrophages. The sequence is that of Protein MGF 110-1L from Ornithodoros (relapsing fever ticks).